The primary structure comprises 101 residues: Putative pterin-4-alpha-carbinolamine dehydratase (101 aa).

It belongs to the pterin-4-alpha-carbinolamine dehydratase family.

It carries out the reaction (4aS,6R)-4a-hydroxy-L-erythro-5,6,7,8-tetrahydrobiopterin = (6R)-L-erythro-6,7-dihydrobiopterin + H2O. This Rhizobium etli (strain ATCC 51251 / DSM 11541 / JCM 21823 / NBRC 15573 / CFN 42) protein is Putative pterin-4-alpha-carbinolamine dehydratase.